The sequence spans 218 residues: Recombination protein RecR (218 aa).

The C4-type zinc-finger motif lies at 56–71 (CRICCNISREEVCRIC). The region spanning 79–195 (GTICVVEEPK…VVSRLASGMP (117 aa)) is the Toprim domain.

Belongs to the RecR family.

Its function is as follows. May play a role in DNA repair. It seems to be involved in an RecBC-independent recombinational process of DNA repair. It may act with RecF and RecO. In Corynebacterium glutamicum (strain R), this protein is Recombination protein RecR.